Reading from the N-terminus, the 223-residue chain is uncharacterized protein (223 aa).

Its subcellular location is the plastid. The protein localises to the chloroplast. This is an uncharacterized protein from Mesostigma viride (Green alga).